The sequence spans 620 residues: Synchronized import protein 1 (620 aa).

The segment at 1-32 is disordered; sequence MGRSKKRSRASSSRLNPLRKAGSNDNNKDTNV. 8 ARM repeats span residues 25 to 64, 66 to 106, 181 to 221, 258 to 299, 340 to 386, 435 to 470, 471 to 510, and 564 to 607; these read DNNKDTNVVNKKLQPLLQNLSSVVPNDRSIALSSISVLCE, AHMR…NLSL, DDIL…TTLD, ANEL…NIDP, IKLQ…NFLP, DSQDDLSIKIGRMGCIWALLKLIFPDGAFESENRAL, INVQMLNNSGFARGIIEEFQNNNDLELQQKCINVLSTYAM, and RGGF…TLDS.

The protein belongs to the nuclear import and ribosome assembly adapter family. As to quaternary structure, forms a heterotrimeric complex with RPL5 and RPL11A or RPL11B; interaction of this complex with KAP104 allows the nuclear import of the heterotrimer. Component of a hexameric 5S RNP precursor complex, composed of 5S RNA, RRS1, RPF2, RPL5, RPL11A/RPL11B and SYO1; this complex acts as a precursor for ribosome assembly.

Its subcellular location is the cytoplasm. It localises to the nucleus. In terms of biological role, nuclear import adapter that specifically recruits the two functionally and topologically linked ribosomal proteins RPL5 and RPL11 (encoded by RPL11A and RPL11B). Guarantees that this cargo pair remains bound together from the time of synthesis in the cytoplasm until delivery to the nascent 5S rRNA in the nucleus. The protein is Synchronized import protein 1 (SYO1) of Saccharomyces cerevisiae (strain ATCC 204508 / S288c) (Baker's yeast).